Here is a 283-residue protein sequence, read N- to C-terminus: Bifunctional protein FolD (283 aa).

An NADP(+)-binding site is contributed by 166–168; the sequence is GAS.

The protein belongs to the tetrahydrofolate dehydrogenase/cyclohydrolase family. Homodimer.

The catalysed reaction is (6R)-5,10-methylene-5,6,7,8-tetrahydrofolate + NADP(+) = (6R)-5,10-methenyltetrahydrofolate + NADPH. It carries out the reaction (6R)-5,10-methenyltetrahydrofolate + H2O = (6R)-10-formyltetrahydrofolate + H(+). Its pathway is one-carbon metabolism; tetrahydrofolate interconversion. In terms of biological role, catalyzes the oxidation of 5,10-methylenetetrahydrofolate to 5,10-methenyltetrahydrofolate and then the hydrolysis of 5,10-methenyltetrahydrofolate to 10-formyltetrahydrofolate. The polypeptide is Bifunctional protein FolD (Coxiella burnetii (strain CbuK_Q154) (Coxiella burnetii (strain Q154))).